The following is a 428-amino-acid chain: Glutamate-1-semialdehyde 2,1-aminomutase (428 aa).

Lys-265 bears the N6-(pyridoxal phosphate)lysine mark.

It belongs to the class-III pyridoxal-phosphate-dependent aminotransferase family. HemL subfamily. In terms of assembly, homodimer. Requires pyridoxal 5'-phosphate as cofactor.

It localises to the cytoplasm. It catalyses the reaction (S)-4-amino-5-oxopentanoate = 5-aminolevulinate. It functions in the pathway porphyrin-containing compound metabolism; protoporphyrin-IX biosynthesis; 5-aminolevulinate from L-glutamyl-tRNA(Glu): step 2/2. This chain is Glutamate-1-semialdehyde 2,1-aminomutase, found in Ruthia magnifica subsp. Calyptogena magnifica.